Reading from the N-terminus, the 332-residue chain is HTH-type transcriptional regulator IdnR (332 aa).

In terms of domain architecture, HTH lacI-type spans 6 to 60 (ISLQDIATLAGVTKMTVSRYIRSPKKVAKETGERIAKIMEEINYIPNRAPGMLLN). The H-T-H motif DNA-binding region spans 8–27 (LQDIATLAGVTKMTVSRYIR).

Functionally, idn operon regulator. May repress gntKU and gntT genes when growing on L-idonate. This Escherichia coli (strain K12) protein is HTH-type transcriptional regulator IdnR (idnR).